We begin with the raw amino-acid sequence, 155 residues long: Transcriptional repressor NrdR (155 aa).

The segment at 3–34 is a zinc-finger region; sequence CPFCGNVDTQVKDSRPAEDHVSIRRRRFCPAC. The ATP-cone domain maps to 49–139; the sequence is LVVIKTNGKR…VYKNFQAADD (91 aa).

Belongs to the NrdR family. Requires Zn(2+) as cofactor.

Negatively regulates transcription of bacterial ribonucleotide reductase nrd genes and operons by binding to NrdR-boxes. The protein is Transcriptional repressor NrdR of Ruegeria sp. (strain TM1040) (Silicibacter sp.).